A 201-amino-acid chain; its full sequence is Potassium-transporting ATPase KdpC subunit (201 aa).

The helical transmembrane segment at 12–34 (LLALTMITGLAYPLAVTGLATVL) threads the bilayer. The interval 73–102 (TVAPDPADSSKTVSAPYNAANSGGSNLGPT) is disordered. Polar residues predominate over residues 81–101 (SSKTVSAPYNAANSGGSNLGP).

This sequence belongs to the KdpC family. The system is composed of three essential subunits: KdpA, KdpB and KdpC.

It is found in the cell inner membrane. Functionally, part of the high-affinity ATP-driven potassium transport (or Kdp) system, which catalyzes the hydrolysis of ATP coupled with the electrogenic transport of potassium into the cytoplasm. This subunit acts as a catalytic chaperone that increases the ATP-binding affinity of the ATP-hydrolyzing subunit KdpB by the formation of a transient KdpB/KdpC/ATP ternary complex. This is Potassium-transporting ATPase KdpC subunit from Rhodopseudomonas palustris (strain ATCC BAA-98 / CGA009).